Consider the following 246-residue polypeptide: 1-(5-phosphoribosyl)-5-[(5-phosphoribosylamino)methylideneamino] imidazole-4-carboxamide isomerase (246 aa).

The active-site Proton acceptor is Asp7. Asp129 serves as the catalytic Proton donor.

The protein belongs to the HisA/HisF family.

Its subcellular location is the cytoplasm. It catalyses the reaction 1-(5-phospho-beta-D-ribosyl)-5-[(5-phospho-beta-D-ribosylamino)methylideneamino]imidazole-4-carboxamide = 5-[(5-phospho-1-deoxy-D-ribulos-1-ylimino)methylamino]-1-(5-phospho-beta-D-ribosyl)imidazole-4-carboxamide. It participates in amino-acid biosynthesis; L-histidine biosynthesis; L-histidine from 5-phospho-alpha-D-ribose 1-diphosphate: step 4/9. In Shewanella sediminis (strain HAW-EB3), this protein is 1-(5-phosphoribosyl)-5-[(5-phosphoribosylamino)methylideneamino] imidazole-4-carboxamide isomerase.